A 209-amino-acid chain; its full sequence is Ribonuclease HII (209 aa).

The region spanning 18–209 (GLVAGVDEVG…FKPVKALLER (192 aa)) is the RNase H type-2 domain. The a divalent metal cation site is built by aspartate 24, glutamate 25, and aspartate 116.

Belongs to the RNase HII family. Mn(2+) is required as a cofactor. It depends on Mg(2+) as a cofactor.

Its subcellular location is the cytoplasm. The catalysed reaction is Endonucleolytic cleavage to 5'-phosphomonoester.. Functionally, endonuclease that specifically degrades the RNA of RNA-DNA hybrids. The protein is Ribonuclease HII of Shewanella sp. (strain ANA-3).